Here is a 217-residue protein sequence, read N- to C-terminus: tRNA (guanine-N(7)-)-methyltransferase (217 aa).

4 residues coordinate S-adenosyl-L-methionine: glutamate 45, glutamate 70, aspartate 97, and aspartate 119. The active site involves aspartate 119. Lysine 123 serves as a coordination point for substrate. An interaction with RNA region spans residues 125 to 130; sequence RHEKRR. Substrate contacts are provided by residues aspartate 155 and 195-198; that span reads TEYE.

It belongs to the class I-like SAM-binding methyltransferase superfamily. TrmB family.

It catalyses the reaction guanosine(46) in tRNA + S-adenosyl-L-methionine = N(7)-methylguanosine(46) in tRNA + S-adenosyl-L-homocysteine. Its pathway is tRNA modification; N(7)-methylguanine-tRNA biosynthesis. Its function is as follows. Catalyzes the formation of N(7)-methylguanine at position 46 (m7G46) in tRNA. The chain is tRNA (guanine-N(7)-)-methyltransferase from Lactobacillus helveticus (strain DPC 4571).